We begin with the raw amino-acid sequence, 156 residues long: 3-hydroxyacyl-[acyl-carrier-protein] dehydratase FabZ (156 aa).

The active site involves H57.

It belongs to the thioester dehydratase family. FabZ subfamily.

The protein localises to the cytoplasm. It carries out the reaction a (3R)-hydroxyacyl-[ACP] = a (2E)-enoyl-[ACP] + H2O. Its function is as follows. Involved in unsaturated fatty acids biosynthesis. Catalyzes the dehydration of short chain beta-hydroxyacyl-ACPs and long chain saturated and unsaturated beta-hydroxyacyl-ACPs. In Anaeromyxobacter sp. (strain K), this protein is 3-hydroxyacyl-[acyl-carrier-protein] dehydratase FabZ.